Consider the following 435-residue polypeptide: Glutamate-1-semialdehyde 2,1-aminomutase (435 aa).

Lys266 is subject to N6-(pyridoxal phosphate)lysine.

It belongs to the class-III pyridoxal-phosphate-dependent aminotransferase family. HemL subfamily. In terms of assembly, homodimer. Requires pyridoxal 5'-phosphate as cofactor.

Its subcellular location is the cytoplasm. It carries out the reaction (S)-4-amino-5-oxopentanoate = 5-aminolevulinate. Its pathway is porphyrin-containing compound metabolism; protoporphyrin-IX biosynthesis; 5-aminolevulinate from L-glutamyl-tRNA(Glu): step 2/2. The protein is Glutamate-1-semialdehyde 2,1-aminomutase of Coxiella burnetii (strain CbuG_Q212) (Coxiella burnetii (strain Q212)).